Here is a 461-residue protein sequence, read N- to C-terminus: Fumarate hydratase class II (461 aa).

Substrate-binding positions include 97–99 (SGT), 127–130 (HPND), 137–139 (SSN), and T185. Residue H186 is the Proton donor/acceptor of the active site. S316 is an active-site residue. Substrate is bound by residues S317 and 322–324 (KVN).

Belongs to the class-II fumarase/aspartase family. Fumarase subfamily. In terms of assembly, homotetramer.

It is found in the cytoplasm. It carries out the reaction (S)-malate = fumarate + H2O. The protein operates within carbohydrate metabolism; tricarboxylic acid cycle; (S)-malate from fumarate: step 1/1. In terms of biological role, involved in the TCA cycle. Catalyzes the stereospecific interconversion of fumarate to L-malate. The protein is Fumarate hydratase class II of Staphylococcus aureus (strain MRSA252).